A 480-amino-acid polypeptide reads, in one-letter code: Aromatic-L-amino-acid decarboxylase (480 aa).

Residue lysine 292 is modified to N6-(pyridoxal phosphate)lysine.

It belongs to the group II decarboxylase family. It depends on pyridoxal 5'-phosphate as a cofactor.

It catalyses the reaction L-tryptophan + H(+) = tryptamine + CO2. It carries out the reaction L-phenylalanine + H(+) = 2-phenylethylamine + CO2. The catalysed reaction is 5-hydroxy-L-tryptophan + H(+) = serotonin + CO2. The enzyme catalyses L-dopa + H(+) = dopamine + CO2. In terms of biological role, involved in bacillamide C biosynthesis. Catalyzes the decarboxylation of L-tryptophan to tryptamine. The tryptamine obtained is then probably incorporated into the bacillamide C peptide, which is derived from the amino acids alanine, cysteine and tryptophan through nonribosomal peptide synthetase (NRPS) biosynthesis strategy. L-tryptophan is the best substrate, but the enzyme displays broad substrate specificity for various aromatic amino acids in vitro and it can also catalyze the decarboxylation of L-phenylalanine, 5-hydroxy-L-tryptophan (L-HTP) and L-DOPA, with lower efficiency. Exhibits weak activity with L-tyrosine. This is Aromatic-L-amino-acid decarboxylase from Bacillus atrophaeus.